Here is a 129-residue protein sequence, read N- to C-terminus: Phosphoribosyl-AMP cyclohydrolase (129 aa).

Asp76 is a binding site for Mg(2+). Cys77 contributes to the Zn(2+) binding site. Residues Asp78 and Asp80 each coordinate Mg(2+). Residues Cys97 and Cys104 each coordinate Zn(2+).

This sequence belongs to the PRA-CH family. As to quaternary structure, homodimer. The cofactor is Mg(2+). It depends on Zn(2+) as a cofactor.

The protein localises to the cytoplasm. The catalysed reaction is 1-(5-phospho-beta-D-ribosyl)-5'-AMP + H2O = 1-(5-phospho-beta-D-ribosyl)-5-[(5-phospho-beta-D-ribosylamino)methylideneamino]imidazole-4-carboxamide. It functions in the pathway amino-acid biosynthesis; L-histidine biosynthesis; L-histidine from 5-phospho-alpha-D-ribose 1-diphosphate: step 3/9. Catalyzes the hydrolysis of the adenine ring of phosphoribosyl-AMP. The polypeptide is Phosphoribosyl-AMP cyclohydrolase (Polaromonas naphthalenivorans (strain CJ2)).